A 65-amino-acid polypeptide reads, in one-letter code: Light-harvesting protein B800/830/1020 beta-2 chain (65 aa).

Over 1 to 17 (TDIRTGLTDEECQEIHE) the chain is Cytoplasmic. The a bacteriochlorophyll site is built by His16 and Asn34. A helical transmembrane segment spans residues 18–40 (MNMLGMHAYWSIGLIANALAYAW). Residues 41–65 (RPFHQGRAGNRLEDHAPDYVRSALT) lie on the Periplasmic side of the membrane.

It belongs to the antenna complex beta subunit family. In terms of assembly, the core complex is formed by different alpha and beta chains, binding bacteriochlorophyll molecules, and arranged most probably in tetrameric structures disposed around the reaction center. The non-pigmented gamma chains may constitute additional components.

It localises to the cell inner membrane. In terms of biological role, antenna complexes are light-harvesting systems, which transfer the excitation energy to the reaction centers. This chain is Light-harvesting protein B800/830/1020 beta-2 chain, found in Halorhodospira halochloris (Ectothiorhodospira halochloris).